The following is a 507-amino-acid chain: Histidine ammonia-lyase (507 aa).

The 5-imidazolinone (Ala-Gly) cross-link spans 143-145; that stretch reads ASG. The residue at position 144 (Ser-144) is a 2,3-didehydroalanine (Ser).

It belongs to the PAL/histidase family. Post-translationally, contains an active site 4-methylidene-imidazol-5-one (MIO), which is formed autocatalytically by cyclization and dehydration of residues Ala-Ser-Gly.

It localises to the cytoplasm. The catalysed reaction is L-histidine = trans-urocanate + NH4(+). It functions in the pathway amino-acid degradation; L-histidine degradation into L-glutamate; N-formimidoyl-L-glutamate from L-histidine: step 1/3. In Alkaliphilus oremlandii (strain OhILAs) (Clostridium oremlandii (strain OhILAs)), this protein is Histidine ammonia-lyase.